The following is a 444-amino-acid chain: Argininosuccinate synthase (444 aa).

ATP is bound by residues 17-25 (AFSGGLDTS) and alanine 43. Position 99 (tyrosine 99) interacts with L-citrulline. Residues glycine 129 and threonine 131 each coordinate ATP. Residues threonine 131, asparagine 135, and aspartate 136 each contribute to the L-aspartate site. Asparagine 135 is an L-citrulline binding site. Aspartate 136 lines the ATP pocket. 2 residues coordinate L-citrulline: arginine 139 and serine 192. An ATP-binding site is contributed by aspartate 194. Residues threonine 201, glutamate 203, and glutamate 280 each coordinate L-citrulline.

It belongs to the argininosuccinate synthase family. Type 2 subfamily. Homotetramer.

Its subcellular location is the cytoplasm. The enzyme catalyses L-citrulline + L-aspartate + ATP = 2-(N(omega)-L-arginino)succinate + AMP + diphosphate + H(+). The protein operates within amino-acid biosynthesis; L-arginine biosynthesis; L-arginine from L-ornithine and carbamoyl phosphate: step 2/3. The sequence is that of Argininosuccinate synthase from Delftia acidovorans (strain DSM 14801 / SPH-1).